The sequence spans 446 residues: Exodeoxyribonuclease 7 large subunit (446 aa).

Belongs to the XseA family. In terms of assembly, heterooligomer composed of large and small subunits.

The protein resides in the cytoplasm. The catalysed reaction is Exonucleolytic cleavage in either 5'- to 3'- or 3'- to 5'-direction to yield nucleoside 5'-phosphates.. Its function is as follows. Bidirectionally degrades single-stranded DNA into large acid-insoluble oligonucleotides, which are then degraded further into small acid-soluble oligonucleotides. This chain is Exodeoxyribonuclease 7 large subunit, found in Streptococcus pneumoniae (strain ATCC BAA-255 / R6).